Consider the following 483-residue polypeptide: MGSRLHLRDIKHGPPLPYHDDIRAFTKEYAESLDAQDPLRKFRDEFIIPSKKDLKRTVLAADENTDDSTDPRCIYLCGNSLGLQPRSTRKYIDRYLRTWAIKGVTGHFTPHDDQLLPPFVDVDVAGAKLMAPVVGALESEVAVMDTLTTNLHLLMASFYRPTQERYKIIIEGKAFPSDHYAVESQIRHHNREPSEAMVLIEPEDPKHPILTTDQILRVIDENASSAALILLSAIQFYTGQYFDIKTITAHAQSKGIIVGWDCAHAAGNVDLQLHDWNVDFAAWCNYKYLNSGPGGMAGLFVHERHGHVESKNGAQNEGFRPRLSGWWGGDKETRFLMDNNFRPQVGAAGFQLSNPSVLDMNAVVASLEIFSRASMEKIRQKSLHLTGYLEHLLVTYPLDAPPEEKPFTIITPSNPAERGAQLSLRLGPGLLEKVLEVLEEQGVIIDERKPDVIRVAPAPLYNTYAELSSSGIHIAYSSYNQYS.

Pyridoxal 5'-phosphate contacts are provided by residues Leu147, Thr148, 175–178, Ser232, Asp261, His264, and Tyr286; that span reads FPSD. Position 287 is an N6-(pyridoxal phosphate)lysine (Lys287). Pyridoxal 5'-phosphate contacts are provided by Trp326 and Asn354.

It belongs to the kynureninase family. As to quaternary structure, homodimer. The cofactor is pyridoxal 5'-phosphate.

It is found in the cytoplasm. The enzyme catalyses L-kynurenine + H2O = anthranilate + L-alanine + H(+). It carries out the reaction 3-hydroxy-L-kynurenine + H2O = 3-hydroxyanthranilate + L-alanine + H(+). Its pathway is amino-acid degradation; L-kynurenine degradation; L-alanine and anthranilate from L-kynurenine: step 1/1. It participates in cofactor biosynthesis; NAD(+) biosynthesis; quinolinate from L-kynurenine: step 2/3. Its function is as follows. Catalyzes the cleavage of L-kynurenine (L-Kyn) and L-3-hydroxykynurenine (L-3OHKyn) into anthranilic acid (AA) and 3-hydroxyanthranilic acid (3-OHAA), respectively. In Aspergillus terreus (strain NIH 2624 / FGSC A1156), this protein is Kynureninase 1 (bna5-1).